The primary structure comprises 147 residues: Large ribosomal subunit protein uL13 (147 aa).

Belongs to the universal ribosomal protein uL13 family. Part of the 50S ribosomal subunit.

Its function is as follows. This protein is one of the early assembly proteins of the 50S ribosomal subunit, although it is not seen to bind rRNA by itself. It is important during the early stages of 50S assembly. The polypeptide is Large ribosomal subunit protein uL13 (Streptomyces avermitilis (strain ATCC 31267 / DSM 46492 / JCM 5070 / NBRC 14893 / NCIMB 12804 / NRRL 8165 / MA-4680)).